The chain runs to 946 residues: Bifunctional glutamine synthetase adenylyltransferase/adenylyl-removing enzyme (946 aa).

The tract at residues 1–440 (MKPLSSPLQQ…VFNELIGDDE (440 aa)) is adenylyl removase. Residues 449–946 (SEQWRELWQD…ASWQKWLVEE (498 aa)) form an adenylyl transferase region.

It belongs to the GlnE family. Requires Mg(2+) as cofactor.

The enzyme catalyses [glutamine synthetase]-O(4)-(5'-adenylyl)-L-tyrosine + phosphate = [glutamine synthetase]-L-tyrosine + ADP. It carries out the reaction [glutamine synthetase]-L-tyrosine + ATP = [glutamine synthetase]-O(4)-(5'-adenylyl)-L-tyrosine + diphosphate. In terms of biological role, involved in the regulation of glutamine synthetase GlnA, a key enzyme in the process to assimilate ammonia. When cellular nitrogen levels are high, the C-terminal adenylyl transferase (AT) inactivates GlnA by covalent transfer of an adenylyl group from ATP to specific tyrosine residue of GlnA, thus reducing its activity. Conversely, when nitrogen levels are low, the N-terminal adenylyl removase (AR) activates GlnA by removing the adenylyl group by phosphorolysis, increasing its activity. The regulatory region of GlnE binds the signal transduction protein PII (GlnB) which indicates the nitrogen status of the cell. This is Bifunctional glutamine synthetase adenylyltransferase/adenylyl-removing enzyme from Shigella dysenteriae serotype 1 (strain Sd197).